Consider the following 830-residue polypeptide: GPI ethanolamine phosphate transferase 2 (830 aa).

The first 32 residues, 1–32 (MNLKQFTCLSCAQLLAILLFIFAFFPRKIVLT), serve as a signal peptide directing secretion. Residues 33–321 (GISKQDPDQD…QYLETVQQID (289 aa)) lie on the Lumenal side of the membrane. 3 N-linked (GlcNAc...) asparagine glycosylation sites follow: Asn145, Asn185, and Asn298. A helical membrane pass occupies residues 322-342 (IVPTIAALFGMPIPMNSVGII). Residues 343 to 405 (IPDFLQLLPN…TKSATNYNYP (63 aa)) are Cytoplasmic-facing. Residues 406-426 (LLTLAFVGFLIITIIAIYVLL) traverse the membrane as a helical segment. Over 427–439 (RYSGPDFWQLRVS) the chain is Lumenal. The helical transmembrane segment at 440-460 (SLSVLLVSIILGVSTFASSFI) threads the bilayer. Residues 461 to 469 (EEEHQLWWW) are Cytoplasmic-facing. Residues 470–490 (IVTAFSAVPLFVYRLNVLIIV) form a helical membrane-spanning segment. Residues 491–533 (RWFIMMACVRSIKFWNNSGQKFIYSNVMSNLLNQNPSWKWCLN) lie on the Lumenal side of the membrane. N-linked (GlcNAc...) asparagine glycosylation occurs at Asn506. The chain crosses the membrane as a helical span at residues 534–554 (MLTFLVLIMASAGFQVLHFIV). At 555–598 (TTILVGLCFTYKISWEIVNGNQAEIPLFMHDLLAKIDFAPTESN) the chain is on the cytoplasmic side. Residues 599–619 (LIVLARVFFQAWAIVVISRLV) traverse the membrane as a helical segment. Over 620-651 (LTKLKVLNKNYLIKDMKVYITILLMFQTSSQN) the chain is Lumenal. Residues 652-672 (IGQFLVFQILESQIFYFFQNI) form a helical membrane-spanning segment. The Cytoplasmic portion of the chain corresponds to 673 to 682 (PTASLTSTSK). The chain crosses the membrane as a helical span at residues 683 to 703 (IYFSNLVSLILQNFTFFQFGG). The Lumenal segment spans residues 704–724 (TNSISTIDLGNAYHGVSSDYN). The chain crosses the membrane as a helical span at residues 725 to 745 (IYVVGILMSVANFAPAIYWSM). Over 746–768 (LPWSINYASIPAQVKLQTFIRSK) the chain is Cytoplasmic. A helical transmembrane segment spans residues 769-789 (LPAFTYHCIFGTCLMTACVVL). The Lumenal portion of the chain corresponds to 790-805 (RFHLFIWSVFSPKLCY). The helical transmembrane segment at 806–826 (FLGWNFVMGLLNGWLPELALL) threads the bilayer. The Cytoplasmic portion of the chain corresponds to 827–830 (CALD).

It belongs to the PIGG/PIGN/PIGO family. PIGG subfamily. Post-translationally, N-glycosylated.

It is found in the endoplasmic reticulum membrane. The protein operates within glycolipid biosynthesis; glycosylphosphatidylinositol-anchor biosynthesis. Its function is as follows. Ethanolamine phosphate transferase involved in glycosylphosphatidylinositol-anchor biosynthesis. Transfers ethanolamine phosphate to the GPI second mannose. Although not essential, addition of ethanolamine phosphate to the second mannose plays an important role in cell separation via the GPI-based modification of daughter-specific proteins. The protein is GPI ethanolamine phosphate transferase 2 (LAS21) of Saccharomyces cerevisiae (strain ATCC 204508 / S288c) (Baker's yeast).